Reading from the N-terminus, the 254-residue chain is Phosphate import ATP-binding protein PstB 2 (254 aa).

Residues 9–249 form the ABC transporter domain; sequence FNIDNLNLFY…PRDDRTRGYV (241 aa). 41–48 serves as a coordination point for ATP; the sequence is GPSGCGKS.

The protein belongs to the ABC transporter superfamily. Phosphate importer (TC 3.A.1.7) family. As to quaternary structure, the complex is composed of two ATP-binding proteins (PstB), two transmembrane proteins (PstC and PstA) and a solute-binding protein (PstS).

It localises to the cell inner membrane. It carries out the reaction phosphate(out) + ATP + H2O = ADP + 2 phosphate(in) + H(+). In terms of biological role, part of the ABC transporter complex PstSACB involved in phosphate import. Responsible for energy coupling to the transport system. The chain is Phosphate import ATP-binding protein PstB 2 from Photobacterium profundum (strain SS9).